Here is a 433-residue protein sequence, read N- to C-terminus: Inositol hexakisphosphate kinase 1 (433 aa).

The interval 100–160 (ETVEQDDTPE…SPKVELHSHS (61 aa)) is disordered. The span at 113–123 (PRRKHSRRSLH) shows a compositional bias: basic residues. The segment covering 139–149 (SFETSESSQET) has biased composition (polar residues). Positions 150 to 160 (KSPKVELHSHS) are enriched in basic and acidic residues. Ser151 carries the phosphoserine modification. 220-228 (PCVLDLKMG) serves as a coordination point for substrate. The tract at residues 362–383 (PLCGPSTSPSNTSLEAGPSSPP) is disordered. Residues 366 to 375 (PSTSPSNTSL) are compositionally biased toward polar residues.

This sequence belongs to the inositol phosphokinase (IPK) family.

The protein localises to the cytoplasm. It localises to the nucleus. It carries out the reaction 1D-myo-inositol hexakisphosphate + ATP = 5-diphospho-1D-myo-inositol 1,2,3,4,6-pentakisphosphate + ADP. The enzyme catalyses 1-diphospho-1D-myo-inositol 2,3,4,5,6-pentakisphosphate + ATP + H(+) = 1,5-bis(diphospho)-1D-myo-inositol 2,3,4,6-tetrakisphosphate + ADP. Functionally, converts inositol hexakisphosphate (InsP6) to diphosphoinositol pentakisphosphate (InsP7/PP-InsP5). Converts 1,3,4,5,6-pentakisphosphate (InsP5) to PP-InsP4. This is Inositol hexakisphosphate kinase 1 (Ip6k1) from Rattus norvegicus (Rat).